A 103-amino-acid chain; its full sequence is Large ribosomal subunit protein uL24 (103 aa).

It belongs to the universal ribosomal protein uL24 family. In terms of assembly, part of the 50S ribosomal subunit.

One of two assembly initiator proteins, it binds directly to the 5'-end of the 23S rRNA, where it nucleates assembly of the 50S subunit. Its function is as follows. One of the proteins that surrounds the polypeptide exit tunnel on the outside of the subunit. The protein is Large ribosomal subunit protein uL24 of Rhizobium meliloti (strain 1021) (Ensifer meliloti).